We begin with the raw amino-acid sequence, 299 residues long: Protein bem46 (299 aa).

The chain crosses the membrane as a helical span at residues 15 to 32 (YSGMASLAVTLIALGFLY).

Belongs to the serine esterase family.

The protein resides in the membrane. Functionally, suppressor of bem1/bud5. This chain is Protein bem46 (bem46), found in Schizosaccharomyces pombe (strain 972 / ATCC 24843) (Fission yeast).